The following is a 156-amino-acid chain: ATP synthase subunit b (156 aa).

Residues 7–27 (LIGQTVAFIIFVWFCMKFVWP) traverse the membrane as a helical segment.

The protein belongs to the ATPase B chain family. In terms of assembly, F-type ATPases have 2 components, F(1) - the catalytic core - and F(0) - the membrane proton channel. F(1) has five subunits: alpha(3), beta(3), gamma(1), delta(1), epsilon(1). F(0) has three main subunits: a(1), b(2) and c(10-14). The alpha and beta chains form an alternating ring which encloses part of the gamma chain. F(1) is attached to F(0) by a central stalk formed by the gamma and epsilon chains, while a peripheral stalk is formed by the delta and b chains.

It localises to the cell inner membrane. Functionally, f(1)F(0) ATP synthase produces ATP from ADP in the presence of a proton or sodium gradient. F-type ATPases consist of two structural domains, F(1) containing the extramembraneous catalytic core and F(0) containing the membrane proton channel, linked together by a central stalk and a peripheral stalk. During catalysis, ATP synthesis in the catalytic domain of F(1) is coupled via a rotary mechanism of the central stalk subunits to proton translocation. Its function is as follows. Component of the F(0) channel, it forms part of the peripheral stalk, linking F(1) to F(0). The chain is ATP synthase subunit b from Shewanella sp. (strain ANA-3).